A 422-amino-acid chain; its full sequence is Synaptotagmin-2 (422 aa).

The disordered stretch occupies residues 1 to 43; that stretch reads MRNIFKRNQEPNVAPATTTATMPLAPVAPADNSTESTGPGESQ. Residues 1–60 lie on the Vesicular side of the membrane; the sequence is MRNIFKRNQEPNVAPATTTATMPLAPVAPADNSTESTGPGESQEDMFAKLKEKFFNEINK. Positions 14–30 are enriched in low complexity; sequence APATTTATMPLAPVAPA. Residues 31–40 show a composition bias toward polar residues; sequence DNSTESTGPG. N-linked (GlcNAc...) asparagine glycosylation is present at N32. The helical transmembrane segment at 61 to 87 threads the bilayer; that stretch reads IPLPPWALIAMAVVAGLLLLTCCFCIC. The Cytoplasmic portion of the chain corresponds to 88–422; sequence KKCCCKKKKN…EVDALLGKNK (335 aa). Residues 102 to 141 form a disordered region; it reads GKGMKNAMNMKDMKGGQDDDDAETGLTEGEGEGEEEKEPE. A compositionally biased stretch (acidic residues) spans 119-139; it reads DDDDAETGLTEGEGEGEEEKE. T125 and T128 each carry phosphothreonine. A phospholipid binding region spans residues 136 to 382; that stretch reads EEKEPENLGK…AIGKIFVGSN (247 aa). 2 consecutive C2 domains span residues 142 to 261 and 273 to 406; these read NLGK…EEWR and KLGD…AQWH. L172, D173, and D179 together coordinate Ca(2+). Phosphothreonine is present on T202. Phosphotyrosine is present on Y230. Residues D231, F232, D233, S236, K237, D239, D304, D310, D364, and D366 each coordinate Ca(2+). Phosphothreonine is present on T386.

This sequence belongs to the synaptotagmin family. As to quaternary structure, homotetramer. Heterodimer; heterodimerizes with SYT1 in presence of calcium. Interacts with SCAMP5. Interacts with STON2. Interacts with PRRT2. In terms of assembly, (Microbial infection) Interacts with C.botulinum neurotoxin type B (BoNT/B, botB). (Microbial infection) Interacts with C.botulinum neurotoxin type G (BoNT/G, botG). Ca(2+) is required as a cofactor. In terms of processing, phosphorylation at Thr-202 by WNK1, changes the calcium requirement for SYT2-binding to phospholipid membranes.

It localises to the cytoplasmic vesicle. It is found in the secretory vesicle. The protein localises to the synaptic vesicle membrane. The protein resides in the chromaffin granule membrane. Its subcellular location is the cytoplasm. Exhibits calcium-dependent phospholipid and inositol polyphosphate binding properties. May have a regulatory role in the membrane interactions during trafficking of synaptic vesicles at the active zone of the synapse. Plays a role in dendrite formation by melanocytes. In terms of biological role, (Microbial infection) Receptor for C.botulinum neurotoxin type B (BoNT/B, botB); interaction is improved in the presence of gangliosides. The toxin binds via the vesicular domain (residues 47-60). Functionally, (Microbial infection) Receptor for C.botulinum neurotoxin type G (BoNT/G, botG); gangliosides are not required for (or only very slightly improve) binding to a membrane-anchored receptor fragment. The toxin binds via the vesicular domain (residues 47-55). In Mus musculus (Mouse), this protein is Synaptotagmin-2.